A 183-amino-acid polypeptide reads, in one-letter code: uncharacterized protein (183 aa).

It belongs to the asfivirus S183L family.

This is an uncharacterized protein from African swine fever virus (isolate Pig/Kenya/KEN-50/1950) (ASFV).